The chain runs to 279 residues: 3-methyl-2-oxobutanoate hydroxymethyltransferase (279 aa).

Mg(2+)-binding residues include aspartate 43 and aspartate 82. 3-methyl-2-oxobutanoate-binding positions include 43–44 (DS), aspartate 82, and lysine 112. Glutamate 114 is a Mg(2+) binding site. The Proton acceptor role is filled by glutamate 181.

Belongs to the PanB family. In terms of assembly, homodecamer; pentamer of dimers. It depends on Mg(2+) as a cofactor.

Its subcellular location is the cytoplasm. The enzyme catalyses 3-methyl-2-oxobutanoate + (6R)-5,10-methylene-5,6,7,8-tetrahydrofolate + H2O = 2-dehydropantoate + (6S)-5,6,7,8-tetrahydrofolate. Its pathway is cofactor biosynthesis; (R)-pantothenate biosynthesis; (R)-pantoate from 3-methyl-2-oxobutanoate: step 1/2. Its function is as follows. Catalyzes the reversible reaction in which hydroxymethyl group from 5,10-methylenetetrahydrofolate is transferred onto alpha-ketoisovalerate to form ketopantoate. This chain is 3-methyl-2-oxobutanoate hydroxymethyltransferase, found in Geobacillus thermodenitrificans (strain NG80-2).